We begin with the raw amino-acid sequence, 413 residues long: Phosphopentomutase (413 aa).

Positions 11, 306, 311, 347, 348, and 359 each coordinate Mn(2+).

It belongs to the phosphopentomutase family. Requires Mn(2+) as cofactor.

The protein resides in the cytoplasm. The enzyme catalyses 2-deoxy-alpha-D-ribose 1-phosphate = 2-deoxy-D-ribose 5-phosphate. It carries out the reaction alpha-D-ribose 1-phosphate = D-ribose 5-phosphate. The protein operates within carbohydrate degradation; 2-deoxy-D-ribose 1-phosphate degradation; D-glyceraldehyde 3-phosphate and acetaldehyde from 2-deoxy-alpha-D-ribose 1-phosphate: step 1/2. Isomerase that catalyzes the conversion of deoxy-ribose 1-phosphate (dRib-1-P) and ribose 1-phosphate (Rib-1-P) to deoxy-ribose 5-phosphate (dRib-5-P) and ribose 5-phosphate (Rib-5-P), respectively. This Helicobacter pylori (strain J99 / ATCC 700824) (Campylobacter pylori J99) protein is Phosphopentomutase.